A 122-amino-acid chain; its full sequence is MKKFNKDIGTYCENLACDYLIKNNFKILECNFKNRLGEIDIISIRNSILIIIEVKGRYNYEFGVPKESVSVSKQKNIIKVTKSYINYKKLYNFNVRFDVIEVYLNKIDSSYKINHIKDAFRT.

This sequence belongs to the UPF0102 family.

The protein is UPF0102 protein CLH_1204 of Clostridium botulinum (strain Alaska E43 / Type E3).